Reading from the N-terminus, the 172-residue chain is C-phycocyanin beta chain (172 aa).

(2R,3E)-phycocyanobilin is bound by residues Asn35, Asp39, Asn72, Arg77, Cys82, 82–88, 149–151, and Cys153; these read CLRDMEI and TTG. Asn72 is modified (N4-methylasparagine).

It belongs to the phycobiliprotein family. In terms of assembly, heterodimer of an alpha and a beta subunit. Dimers further assemble into trimers and the trimers into hexamers. The basic functional unit of phycobiliproteins is a ring-shaped hexamer formed from two back-to-back trimers contacting via the alpha chain subunits. The trimers are composed of alpha/beta subunit heterodimers arranged around a three-fold axis of symmetry. The phycoerythrins also contain a gamma subunit which is located in the center of the hexamer. Contains two covalently linked phycocyanobilin chromophores.

Its subcellular location is the plastid. The protein resides in the chloroplast thylakoid membrane. Its function is as follows. Light-harvesting photosynthetic tetrapyrrole chromophore-protein from the phycobiliprotein complex (phycobilisome, PBS). Phycocyanin is the major phycobiliprotein in the PBS rod. This chain is C-phycocyanin beta chain (cpcB), found in Galdieria sulphuraria (Red alga).